A 442-amino-acid polypeptide reads, in one-letter code: Putative FNIP repeat-containing protein L170 (442 aa).

FNIP repeat units lie at residues 213-252 (FNSS…IGRG), 253-294 (FNSE…LGCF), and 295-348 (FNQS…FGMY).

The polypeptide is Putative FNIP repeat-containing protein L170 (Acanthamoeba polyphaga mimivirus (APMV)).